A 319-amino-acid polypeptide reads, in one-letter code: Acetyl-coenzyme A carboxylase carboxyl transferase subunit alpha (319 aa).

The CoA carboxyltransferase C-terminal domain occupies 35–296 (NIDEEVHRLR…KAQLLADLAD (262 aa)).

This sequence belongs to the AccA family. In terms of assembly, acetyl-CoA carboxylase is a heterohexamer composed of biotin carboxyl carrier protein (AccB), biotin carboxylase (AccC) and two subunits each of ACCase subunit alpha (AccA) and ACCase subunit beta (AccD).

Its subcellular location is the cytoplasm. The enzyme catalyses N(6)-carboxybiotinyl-L-lysyl-[protein] + acetyl-CoA = N(6)-biotinyl-L-lysyl-[protein] + malonyl-CoA. It participates in lipid metabolism; malonyl-CoA biosynthesis; malonyl-CoA from acetyl-CoA: step 1/1. Component of the acetyl coenzyme A carboxylase (ACC) complex. First, biotin carboxylase catalyzes the carboxylation of biotin on its carrier protein (BCCP) and then the CO(2) group is transferred by the carboxyltransferase to acetyl-CoA to form malonyl-CoA. In Shigella sonnei (strain Ss046), this protein is Acetyl-coenzyme A carboxylase carboxyl transferase subunit alpha.